The chain runs to 997 residues: Burkholderia TALE-like protein 2 (997 aa).

A Cryptic repeat -1 repeat occupies 19–50; sequence LSPLERIKIEKHYGGGATLAFISNQHDELAQV. One copy of the Cryptic repeat 0 repeat lies at 51–83; that stretch reads LSRADILKIASYDCAAQALQAVLDCGPMLGKRG. Core repeat repeat units lie at residues 84-116, 117-147, 148-180, 181-213, 214-244, 245-277, 278-310, 311-343, 344-376, 377-409, 410-442, 443-475, 476-508, 509-539, 540-572, 573-605, 606-638, 639-671, 672-704, 705-737, 738-770, 771-803, 804-836, 837-869, 870-902, 903-935, and 936-967; these read FSRADIVRIAGNGGGAQALYSVLDVEPTLGKRG, FSQVDVVKIAGGGAQALHTVLEIGPTLGERG, FSRGDIVTIAGNNGGAQALQAVLELEPTLRERG, FNQADIVKIAGNGGGAQALQAVLDVEPALGKRG, FSRVDIAKIAGGGAQALQAVLGLEPTLRKRG, FHPTDIIKIAGNNGGAQALQAVLDLELMLRERG, FSQADIVKMASNIGGAQALQAVLNLEPALCERG, FSQPDIVKMAGNSGGAQALQAVLDLELAFRERG, FSQADIVKMASNIGGAQALQAVLELEPALHERG, FSQANIVKMAGNSGGAQALQAVLDLELVFRERG, FSQPEIVEMAGNIGGAQALHTVLDLELAFRERG, VRQADIVKIVGNNGGAQALQAVFELEPTLRERG, FNQATIVKIAANGGGAQALYSVLDVEPTLDKRG, FSRVDIVKIAGGGAQALHTAFELEPTLRKRG, FNPTDIVKIAGNKGGAQALQAVLELEPALRERG, FNQATIVKMAGNAGGAQALYSVLDVEPALRERG, FSQPEIVKIAGNIGGAQALHTVLELEPTLHKRG, FNPTDIVKIAGNSGGAQALQAVLELEPAFRERG, FGQPDIVKMASNIGGAQALQAVLELEPALRERG, FSQPDIVEMAGNIGGAQALQAVLELEPAFRERG, FSQSDIVKIAGNIGGAQALQAVLELEPTLRESD, FRQADIVNIAGNDGSTQALKAVIEHGPRLRQRG, FNRASIVKIAGNSGGAQALQAVLKHGPTLDERG, FNLTNIVKIAGNGGGAQALKAVIEHGPTLQQRG, FNLTDIVEMAGKGGGAQALKAVLEHGPTLRQRG, FNLIDIVEMASNTGGAQALKTVLEHGPTLRQRD, and LSLIDIVEIASNGGAQALKAVLKYGPVLMQAG. Residues 84–967 form a buD domain region; it reads FSRADIVRIA…KYGPVLMQAG (884 aa). 4 ANK repeats span residues 772 to 801, 805 to 834, 838 to 867, and 871 to 900; these read RQADIVNIAGNDGSTQALKAVIEHGPRLRQ, NRASIVKIAGNSGGAQALQAVLKHGPTLDE, NLTNIVKIAGNGGGAQALKAVIEHGPTLQQ, and NLTDIVEMAGKGGGAQALKAVLEHGPTLRQ. The stretch at 968 to 997 is one Cryptic repeat +1 repeat; it reads RSNEEIVHVAARRGGAGRIRKMVALLLERQ.

The protein belongs to the transcription activator-like effector (TALE) family. Bat subfamily.

Binds to DNA in a sequence-specific manner. This chain is Burkholderia TALE-like protein 2, found in Mycetohabitans rhizoxinica (strain DSM 19002 / CIP 109453 / HKI 454) (Paraburkholderia rhizoxinica).